Consider the following 296-residue polypeptide: (3R)-3-[(carboxymethyl)amino]fatty acid oxygenase/decarboxylase (296 aa).

Residues Tyr66, Tyr71, and Gly98 each coordinate (3R)-3-[(carboxymethyl)amino]butanoate. Tyr66, Tyr71, and Gly98 together coordinate (3R)-3-{[carboxy(hydroxy)methyl]amino}butanoate. Fe(2+) is bound by residues His102 and Asp104. (3R)-3-[(carboxymethyl)amino]butanoate-binding residues include Tyr105 and Lys163. Residues Tyr105 and Lys163 each coordinate (3R)-3-{[carboxy(hydroxy)methyl]amino}butanoate. His265 contacts Fe(2+). His269 serves as a coordination point for 2-oxoglutarate. (3R)-3-[(carboxymethyl)amino]butanoate is bound at residue Arg280. (3R)-3-{[carboxy(hydroxy)methyl]amino}butanoate is bound at residue Arg280.

It belongs to the TfdA dioxygenase family. The cofactor is Fe(2+).

It carries out the reaction a (3R)-3-[(carboxymethyl)amino]fatty acid + 2 2-oxoglutarate + 2 O2 = a (3R)-3-isocyanyl-fatty acid + 2 succinate + 3 CO2 + 2 H2O. The catalysed reaction is a (3R)-3-[(carboxymethyl)amino]fatty acid + 2-oxoglutarate + O2 = a (3R)-3-{[carboxy(hydroxy)methyl]amino}fatty acid + succinate + CO2. It catalyses the reaction a (3R)-3-{[carboxy(hydroxy)methyl]amino}fatty acid + 2-oxoglutarate + O2 = a (3R)-3-isocyanyl-fatty acid + succinate + 2 CO2 + 2 H2O. The enzyme catalyses (3R)-3-[(carboxymethyl)amino]butanoate + 2 2-oxoglutarate + 2 O2 = (3R)-3-isocyanylbutanoate + 2 succinate + 3 CO2 + 2 H2O. It carries out the reaction (3R)-3-[(carboxymethyl)amino]butanoate + 2-oxoglutarate + O2 = (3R)-3-{[carboxy(hydroxy)methyl]amino}butanoate + succinate + CO2. The catalysed reaction is (3R)-3-{[carboxy(hydroxy)methyl]amino}butanoate + 2-oxoglutarate + O2 = (3R)-3-isocyanylbutanoate + succinate + 2 CO2 + 2 H2O. Involved in the biosynthesis of a unique class of isonitrile lipopeptides (INLPs). Catalyzes the conversion of (3R)-3-[(carboxymethyl)amino]fatty acids such as (3R)-3-[(carboxymethyl)amino]butanoate (CABA) to (3R)-3-isocyanylbutanoate (INBA) through an oxidative decarboxylation mechanism, thereby generating the isonitrile group of INLPs. The sequence is that of (3R)-3-[(carboxymethyl)amino]fatty acid oxygenase/decarboxylase from Streptomyces coeruleorubidus.